A 257-amino-acid chain; its full sequence is Ribonuclease HII (257 aa).

Residues 72–257 (TYIAGIDEVG…FAPIKDMIQK (186 aa)) enclose the RNase H type-2 domain. A divalent metal cation is bound by residues aspartate 78, glutamate 79, and aspartate 170.

It belongs to the RNase HII family. Mn(2+) is required as a cofactor. Mg(2+) serves as cofactor.

It is found in the cytoplasm. It carries out the reaction Endonucleolytic cleavage to 5'-phosphomonoester.. Functionally, endonuclease that specifically degrades the RNA of RNA-DNA hybrids. The chain is Ribonuclease HII from Bacillus thuringiensis (strain Al Hakam).